Reading from the N-terminus, the 309-residue chain is GTP cyclohydrolase MptA 2 (309 aa).

It belongs to the GTP cyclohydrolase IV family. In terms of assembly, homodimer. The cofactor is Fe(2+).

It carries out the reaction GTP + H2O = 7,8-dihydroneopterin 2',3'-cyclic phosphate + formate + diphosphate + H(+). It functions in the pathway cofactor biosynthesis; 5,6,7,8-tetrahydromethanopterin biosynthesis. Functionally, converts GTP to 7,8-dihydro-D-neopterin 2',3'-cyclic phosphate, the first intermediate in the biosynthesis of coenzyme methanopterin. In Methanocella arvoryzae (strain DSM 22066 / NBRC 105507 / MRE50), this protein is GTP cyclohydrolase MptA 2.